The following is a 2898-amino-acid chain: MEDEQEQRRRKVEAGRAKLANFRQRKTKGDCPNSKKKTAKRKGSAVHASVQEEGSVATPNSELPQGGAVFESPSCSNTLEGTRGASAAQEQEDCELDVTDLQGQQQTQPPPPQTAHSLELEALRLSLNNMHTAQLELTQANLQKEKETALTELREMLNGRRAQELALLQSRQQCELELLREQHAREKEEMALRSGQEAAELKEKLRSEMEKNAQTIETLKQDWESERELCLENLRQELSLKHQSEMEGLQSQFQKELSEQKVELEKIFQAKHEAEVSLKNLEAQHQAAIKKLQEDLQSEHCQYLQDLEQKFREKEKAKELELETLQASYEDLKAQSQEEIRLLWSQLESMKTNREELNGSWDPVLAQASHLEELEHLRSGFAQQQQQERAQHESELEHLRVYFEKKLKDAEKTYQEDLTVFQQRLQEAREDSLESTEISSSCVLPEETSGREGKEPPDPLDLQLGQPKVQESLVEDCQVKLSKAEEKIQQMKEEFQKKEAEWELSREELKREAEERLASMFLELREKAESEKLSIISRFEHRESSMRHLQDQQAAQILDLERSLMEQQGHLRQLEQELTRDDLLPCSQCGQEPAMAQEEKNGALLREKEDCALQLLMAQNRFLEERKEIMEKFAKEQDAFLRDAQEKHNHELQLLQQGHQQQLLALRMELETKHRSELTEQLASSESRRQALLETHVAELQVKHNAEISALEKRHLSNLDELESCYVADVQTIRDEHQQALELLRAELEEQLQKKESCHREMLTQELENLKRQHAEELQSVRDSLRMEMSAQHIENGKGPAADLQGAHQQDPAMALHNEGHLLVEDGDAVLRSVDAEGLLHQAGPQELGDAHTVEMQKSQAELAKPQELQASQDQVAQVRDKVFLLNRELEECRAELEQLQQRRERENQEGTTLICMLRADLELAQGEGKALRDALRRLLDLFGDTLKAAVTLKSRISERAGLLLDHEDAADTSDARLAAAALGDMWSDEGLLEIDRTLPEGAETSSVCEISSHVCESFFISPENTLDCEQPIRRVYQSLSTAVEGLLEMALDSSKQLEEARQLHRCVEREFRHRNEEMAQAMQKQQELLERLREESAAKDRLALELHTAKGLLEGFKVEKVDLQEALGKKEESEQQLILELEDLRKQLQQAARELLTLKEEKSVLWNQKETLTNEAKEREAALQEEVESLTRVQWESRKQSEKDRATLLSQMRVLESELEDQLVQHRGCAQLAEEVATLKQQLAALDKHLRSQRQFMDDQAAEREHEREEFQQEIQRLEGQLRQAARPRPPGPRDSQCVQLDEEVELLQEKLREKLDGFNELVIKKDFADQQLLIQEEEIKRLEETNASIQRQMVQLQEELEKQKKSMEELKEKEILKQENMGDLLLTTVSRSGLDEAGCPMLPQGSSSRGPEAQPDVTERALLQHENEVVHRRNSEIDELKSLIENLQENQRQLQKDKAEEIEQLHEVIEKLQSELSLMGPKVHEVSDPQAGSLHSELACLRGEGLGGQALRSELQAAQAAKEVFGQLLANQAHGHSQALEALQQRLQDAEEVAARHLAELEHCVALREAEVEAMASQIQEFAATLKAKEAIIEQRDLEIDAVNKWKVSHSLELEAILLALAHFRHALEQQTCATPDEPPELRQLRVQCARLSHQLQVLYRPFLKCRMQLDQHQPHVASIGCANPCADDELEQEGVSNRLALAPHSLAAQAKEELEDCPLGKANLMAQVRQLQEELDHRVHSVASRDTNSETCKLQQPNLSENGPRNHCCNGEESKPSPPDDVLNIAKTTWDVIDIIKNQDLLVQVEMPDFPTQEKLTSQGGPFSSQASGHSGSLLPEEAAEPQQDPVRALDLSSWSSPEVVRKDPSLEPQHSLPLTPGVGTVSLHSVDISPDWTDPLLQADVSGLLCYPGKSASGQAPLWAVAPSAGKHHAERTATEKDVEDFIVTSFDSQELLTSPSHELARRSDGSRKSDGPDIAMMLTLGSEGSETPTTDLVAAAAAAVPFSRRFVQSPGAMKEKEIHAKQMKALLQMVFDESHQILALSESQDPSSALNKGEPRDPLDGFPRDSQALSEVTTDKGEKESLETHLTWSEELLRAIQEVFAREQEKAELQPRPYGSNLGDYNSLVQRLEKVIQEQGDPQKVQDHLCLSDRSSLLAEIQALRAQLRMTHLQNQEKLQQLCAALTSTEARGSQREHQLRRQVELLAYKVEQEKCIANELQKTLSKEQETASDVRKRLVVEQNAVQDLKSELHACKQENTSLLESLDKVQQEVLRLRAVLDGKEKELKVVLEELESERGKGQALQAQQEEQQLRYLQREGQSSRALEELKLSLEKQLAQNNQLCVALKHERAAKDNLQKELQIEASRCEALLAQEKGQLSELQKSLEAERSRSLELSEALQHERLLTEQLSRNSQEACARQETQVQHALLRKLKAEKTRALELEAMLEKVQKQAAHTQQQLEAQAQERCVELRREKERELEIQRQRDEHKIEQLQRLVRELRWKEEVSGGNGPCRGSPGRGSLERDQFQEQQQELEKIRQQLLCAAGLLTSFTNHTVDRTIKDWTSSNEKAVSSLMRTLEELKSELSMPTSFQKKMTAELQVQLMNELLSDNDALTKAVGMATREKAELCRTVSRLEKTLKHHTQKGCVLNRQSKSSLKQDGTDLQSSLRHSDPEWHSQTTSGDTNTCNIKMEKLYLHYLRAESFRKALIYQKKYLLLLIGGFQDSEQETLSMIAHLGVFPSKADKKITMSRPFTKFRTAVRVVIAVLRLRFLVKKWQEVDRKGALVHPKSTRHGHRTSQRQRSPSGPRASLPTRDTSSGPTKASRHSPRSAAAGSPGKERSTSTPSSRLERSLTASQDPEHSLTEYIHHLEMIQQRLGGLPPDSTQKSCHQKIKQ.

Residues 1-117 (MEDEQEQRRR…QPPPPQTAHS (117 aa)) are disordered. The span at 34–44 (SKKKTAKRKGS) shows a compositional bias: basic residues. Residue Ser44 is modified to Phosphoserine. Coiled coils occupy residues 127–343 (LNNM…IRLL) and 382–434 (AQQQ…DSLE). Residues 429–460 (REDSLESTEISSSCVLPEETSGREGKEPPDPL) are disordered. Residues 448 to 457 (TSGREGKEPP) are compositionally biased toward basic and acidic residues. Coiled coils occupy residues 468–527 (KVQE…LREK), 611–696 (CALQ…LETH), 727–787 (VADV…SLRM), and 872–939 (SQDQ…LRRL). At Ser1022 the chain carries Phosphoserine. Coiled coils occupy residues 1069-1383 (EREF…QENM), 1429-1482 (NEVV…SLMG), and 1529-1593 (QLLA…AKEA). The residue at position 1437 (Ser1437) is a Phosphoserine. Disordered stretches follow at residues 1745 to 1786 (VASR…DDVL), 1815 to 1880 (TQEK…PLTP), and 1958 to 1979 (TSPSHELARRSDGSRKSDGPDI). 2 stretches are compositionally biased toward polar residues: residues 1747 to 1766 (SRDTNSETCKLQQPNLSENG) and 1817 to 1834 (EKLTSQGGPFSSQASGHS). An interaction with CDK5RAP2 region spans residues 1801 to 1822 (NQDLLVQVEMPDFPTQEKLTSQ). Residues Ser1828, Ser1859, Ser1860, and Ser1959 each carry the phosphoserine modification. Basic and acidic residues predominate over residues 1963–1976 (ELARRSDGSRKSDG). Ser1987 carries the post-translational modification Phosphoserine. Polar residues predominate over residues 2046 to 2055 (SESQDPSSAL). Residues 2046–2088 (SESQDPSSALNKGEPRDPLDGFPRDSQALSEVTTDKGEKESLE) are disordered. Composition is skewed to basic and acidic residues over residues 2058 to 2068 (GEPRDPLDGFP) and 2078 to 2088 (TTDKGEKESLE). At Ser2128 the chain carries Phosphoserine. Coiled-coil stretches lie at residues 2211–2403 (KVEQ…EALQ) and 2429–2590 (HALL…ELSM). 2 disordered regions span residues 2509-2532 (VSGGNGPCRGSPGRGSLERDQFQE) and 2653-2684 (NRQSKSSLKQDGTDLQSSLRHSDPEWHSQTTS). Residues 2545–2810 (LCAAGLLTSF…SQRQRSPSGP (266 aa)) form an interaction with NEK2 region. The segment covering 2653 to 2671 (NRQSKSSLKQDGTDLQSSL) has biased composition (polar residues). Positions 2758 to 2771 (KFRTAVRVVIAVLR) are calmodulin-binding. The segment at 2787–2898 (ALVHPKSTRH…QKSCHQKIKQ (112 aa)) is disordered. Residues 2792 to 2802 (KSTRHGHRTSQ) are compositionally biased toward basic residues. Over residues 2845–2860 (TSTPSSRLERSLTASQ) the composition is skewed to polar residues. A compositionally biased stretch (basic and acidic residues) spans 2861 to 2874 (DPEHSLTEYIHHLE). Ser2865 carries the phosphoserine modification.

As to quaternary structure, interacts with DISC1 and PCM1. Binds calmodulin. Interacts with CEP131. Interacts with CDK5RAP2; the interaction is leading to centrosomal localization of PCNT and CDK5RAP2. Interacts with CHD3. Interacts with CHD4; the interaction regulates centrosome integrity. Interacts with NEK2. Interacts with CCDC13. Interacts with CEP68. Interacts with ATF5; the ATF5:PCNT:polyglutamylated tubulin (PGT) tripartite unites the mother centriole and the pericentriolar material (PCM) in the centrosome. Cleaved during mitotis which leads to removal of CDK5RAP2 from the centrosome and promotes centriole disengagement and subsequent centriole separation. The C-terminal fragment is rapidly degraded following cleavage. In terms of processing, ubiquitinated by TRIM43; leading to proteasomal degradation. As to expression, expressed in heart and lung (at protein level). Expressed in kidney, thymus, liver, brain, muscle, testis, spleen, lung and heart.

Its subcellular location is the cytoplasm. It is found in the cytoskeleton. The protein resides in the microtubule organizing center. The protein localises to the centrosome. Functionally, integral component of the filamentous matrix of the centrosome involved in the initial establishment of organized microtubule arrays in both mitosis and meiosis. Plays a role, together with DISC1, in the microtubule network formation. Is an integral component of the pericentriolar material (PCM). May play an important role in preventing premature centrosome splitting during interphase by inhibiting NEK2 kinase activity at the centrosome. The polypeptide is Pericentrin (Pcnt) (Mus musculus (Mouse)).